The primary structure comprises 179 residues: Large ribosomal subunit protein uL5 (179 aa).

The protein belongs to the universal ribosomal protein uL5 family. As to quaternary structure, part of the 50S ribosomal subunit; part of the 5S rRNA/L5/L18/L25 subcomplex. Contacts the 5S rRNA and the P site tRNA. Forms a bridge to the 30S subunit in the 70S ribosome.

Its function is as follows. This is one of the proteins that bind and probably mediate the attachment of the 5S RNA into the large ribosomal subunit, where it forms part of the central protuberance. In the 70S ribosome it contacts protein S13 of the 30S subunit (bridge B1b), connecting the 2 subunits; this bridge is implicated in subunit movement. Contacts the P site tRNA; the 5S rRNA and some of its associated proteins might help stabilize positioning of ribosome-bound tRNAs. The polypeptide is Large ribosomal subunit protein uL5 (Caldanaerobacter subterraneus subsp. tengcongensis (strain DSM 15242 / JCM 11007 / NBRC 100824 / MB4) (Thermoanaerobacter tengcongensis)).